We begin with the raw amino-acid sequence, 439 residues long: Glucose-1-phosphate adenylyltransferase (439 aa).

Alpha-D-glucose 1-phosphate-binding positions include Tyr-116, Gly-182, 197-198, and Ser-215; that span reads EK.

Belongs to the bacterial/plant glucose-1-phosphate adenylyltransferase family. As to quaternary structure, homotetramer.

The catalysed reaction is alpha-D-glucose 1-phosphate + ATP + H(+) = ADP-alpha-D-glucose + diphosphate. It participates in glycan biosynthesis; glycogen biosynthesis. Functionally, involved in the biosynthesis of ADP-glucose, a building block required for the elongation reactions to produce glycogen. Catalyzes the reaction between ATP and alpha-D-glucose 1-phosphate (G1P) to produce pyrophosphate and ADP-Glc. The sequence is that of Glucose-1-phosphate adenylyltransferase from Pasteurella multocida (strain Pm70).